The primary structure comprises 313 residues: Ribosomal RNA small subunit methyltransferase H (313 aa).

S-adenosyl-L-methionine contacts are provided by residues 35–37 (GGH), Asp55, Phe79, Asp101, and Gln108.

Belongs to the methyltransferase superfamily. RsmH family.

It localises to the cytoplasm. The enzyme catalyses cytidine(1402) in 16S rRNA + S-adenosyl-L-methionine = N(4)-methylcytidine(1402) in 16S rRNA + S-adenosyl-L-homocysteine + H(+). Functionally, specifically methylates the N4 position of cytidine in position 1402 (C1402) of 16S rRNA. The sequence is that of Ribosomal RNA small subunit methyltransferase H from Enterobacter sp. (strain 638).